The following is a 381-amino-acid chain: Glycerophosphocholine acyltransferase 1 (381 aa).

The Cytoplasmic portion of the chain corresponds to 1–63 (MANNEDSNSN…IAKQAEEHER (63 aa)). Residues 64-84 (FINKVTHLVGVLGFGGFCFLL) traverse the membrane as a helical segment. Residues 85 to 89 (GARPQ) lie on the Lumenal side of the membrane. The helical transmembrane segment at 90–110 (DIPLVYCFFYVIFVPLRWIYY) threads the bilayer. Over 111–116 (RFKKWH) the chain is Cytoplasmic. A helical membrane pass occupies residues 117–137 (YYLLDFCYYANTIFLVDLLLY). The Lumenal segment spans residues 138–141 (PKNE). A helical membrane pass occupies residues 142–162 (KLFMVCFSFAEGPLAWAIIVW). Residues 163-173 (RCSLVFSSPDK) are Cytoplasmic-facing. Residues 174 to 194 (IVSVLIHLLPGLVFFTIRWWN) form a helical membrane-spanning segment. Residues 195–223 (PATFAAMHPVGTDRRVSWPYVEDKAYLFT) are Lumenal-facing. The chain crosses the membrane as a helical span at residues 224 to 244 (WLFLVPLVVYTLWQVLYFLIV). Residues 245 to 291 (NVLRRQRLLRDPEVMTSYRELSKKAEKANNKLWQLSGLLGDQNRIWM) lie on the Cytoplasmic side of the membrane. The helical transmembrane segment at 292–312 (YILFQAIFTVATMALTVPIFL) threads the bilayer. Residues 313–315 (SYR) are Lumenal-facing. Residues 316-336 (LHVIFQILKISAAVWNGGSFL) traverse the membrane as a helical segment. At 337-381 (LEVMPRQVIQKEKKKKAEMQPIEEQILHHEAVSHPTENEPKSTET) the chain is on the cytoplasmic side.

The protein belongs to the GPC1 family.

It is found in the membrane. It catalyses the reaction sn-glycerol 3-phosphocholine + an acyl-CoA = a 1-acyl-sn-glycero-3-phosphocholine + CoA. The enzyme catalyses sn-glycero-3-phosphoethanolamine + an acyl-CoA = a monoacyl-sn-glycero-3-phosphoethanolamine + CoA. The catalysed reaction is sn-glycerol 3-phosphocholine + (9Z)-octadecenoyl-CoA = (9Z-octadecenoyl)-sn-glycero-3-phosphocholine + CoA. Glycerophosphocholine acyltransferase (GPCAT) that utilizes acyl-CoA to acylate glycero-3-phosphocholine (GPC), forming lysophosphatidylcholine (LPC). Shows broad acyl specificities with a preference for 16:0-CoA, polyunsaturated acyl-CoA, and the hydroxylated ricinoleoyl-CoA. Also catalyzes the acylation of glycero-3-phosphoethanolamine (GPE) with acyl-CoA. In addition to acyl-CoA, GPCAT efficiently utilizes LPC and lysophosphatidylethanolamine (LPE) as acyl donors in the acylation of GPC. Contributes to the maintenance of phosphatidylcholine (PC) homeostasis and might also have specific functions in acyl editing of PC, such as transferring acyl groups modified at the sn-2 position of PC to the sn-1. This Arabidopsis thaliana (Mouse-ear cress) protein is Glycerophosphocholine acyltransferase 1.